The primary structure comprises 471 residues: Glutamate--tRNA ligase (471 aa).

The 'HIGH' region signature appears at 10–20 (PSPTGYLHIGG). Zn(2+) is bound by residues C107, C109, C134, and E136. A 'KMSKS' region motif is present at residues 244-248 (RLSKR). Residue K247 participates in ATP binding.

The protein belongs to the class-I aminoacyl-tRNA synthetase family. Glutamate--tRNA ligase type 1 subfamily. Monomer. Zn(2+) is required as a cofactor.

The protein localises to the cytoplasm. The enzyme catalyses tRNA(Glu) + L-glutamate + ATP = L-glutamyl-tRNA(Glu) + AMP + diphosphate. Catalyzes the attachment of glutamate to tRNA(Glu) in a two-step reaction: glutamate is first activated by ATP to form Glu-AMP and then transferred to the acceptor end of tRNA(Glu). This is Glutamate--tRNA ligase from Anaeromyxobacter sp. (strain Fw109-5).